The primary structure comprises 224 residues: 7-cyano-7-deazaguanine synthase (224 aa).

12 to 22 (MSGGMDSTLGA) contributes to the ATP binding site. Positions 191, 199, 202, and 205 each coordinate Zn(2+).

The protein belongs to the QueC family. Zn(2+) is required as a cofactor.

It carries out the reaction 7-carboxy-7-deazaguanine + NH4(+) + ATP = 7-cyano-7-deazaguanine + ADP + phosphate + H2O + H(+). It functions in the pathway purine metabolism; 7-cyano-7-deazaguanine biosynthesis. In terms of biological role, catalyzes the ATP-dependent conversion of 7-carboxy-7-deazaguanine (CDG) to 7-cyano-7-deazaguanine (preQ(0)). In Sulfurimonas denitrificans (strain ATCC 33889 / DSM 1251) (Thiomicrospira denitrificans (strain ATCC 33889 / DSM 1251)), this protein is 7-cyano-7-deazaguanine synthase.